The sequence spans 460 residues: Cyclin-A1-1 (460 aa).

Disordered stretches follow at residues 1-52 (MSNI…ITNQ) and 95-126 (PHKV…KSPQ). Composition is skewed to low complexity over residues 10–19 (SSFSSSTKSS) and 100–111 (SSPSKSDDGSVS).

This sequence belongs to the cyclin family. Cyclin AB subfamily. In terms of assembly, interacts with FZR2/CCS52A1, FZR1/CCS52A2 and FZR3/CCS52B.

The sequence is that of Cyclin-A1-1 (CYCA1-1) from Arabidopsis thaliana (Mouse-ear cress).